Consider the following 303-residue polypeptide: Tyrosine recombinase XerC (303 aa).

The region spanning 1–85 (MRADLDAFLE…ATRGLYQYLL (85 aa)) is the Core-binding (CB) domain. Residues 106–285 (KLPRTLDADR…DFQHLASVYD (180 aa)) enclose the Tyr recombinase domain. Residues arginine 146, lysine 170, histidine 237, arginine 240, and histidine 263 contribute to the active site. The O-(3'-phospho-DNA)-tyrosine intermediate role is filled by tyrosine 272.

The protein belongs to the 'phage' integrase family. XerC subfamily. In terms of assembly, forms a cyclic heterotetrameric complex composed of two molecules of XerC and two molecules of XerD.

It is found in the cytoplasm. In terms of biological role, site-specific tyrosine recombinase, which acts by catalyzing the cutting and rejoining of the recombining DNA molecules. The XerC-XerD complex is essential to convert dimers of the bacterial chromosome into monomers to permit their segregation at cell division. It also contributes to the segregational stability of plasmids. In Pseudomonas aeruginosa (strain LESB58), this protein is Tyrosine recombinase XerC.